A 300-amino-acid polypeptide reads, in one-letter code: Bifunctional protein FolD (300 aa).

NADP(+)-binding positions include glycine 169–glycine 171, serine 196, and isoleucine 237.

Belongs to the tetrahydrofolate dehydrogenase/cyclohydrolase family. Homodimer.

The enzyme catalyses (6R)-5,10-methylene-5,6,7,8-tetrahydrofolate + NADP(+) = (6R)-5,10-methenyltetrahydrofolate + NADPH. It carries out the reaction (6R)-5,10-methenyltetrahydrofolate + H2O = (6R)-10-formyltetrahydrofolate + H(+). It participates in one-carbon metabolism; tetrahydrofolate interconversion. Functionally, catalyzes the oxidation of 5,10-methylenetetrahydrofolate to 5,10-methenyltetrahydrofolate and then the hydrolysis of 5,10-methenyltetrahydrofolate to 10-formyltetrahydrofolate. The protein is Bifunctional protein FolD of Clavibacter michiganensis subsp. michiganensis (strain NCPPB 382).